The chain runs to 380 residues: Guanine nucleotide-binding protein subunit beta (380 aa).

WD repeat units lie at residues Gly64–Asn94, Leu106–Asn136, Gly155–Asp186, Gly203–Asp234, Gly247–Asp277, Asn296–Asp326, and Ser342–Ala372.

It belongs to the WD repeat G protein beta family. G proteins are composed of 3 units, alpha, beta and gamma. Interacts with the gamma subunits RGG1 and RGG2.

Its subcellular location is the cell membrane. In terms of biological role, guanine nucleotide-binding proteins (G proteins) are involved as modulators or transducers in various transmembrane signaling systems. The beta and gamma chains are required for the GTPase activity, for replacement of GDP by GTP, and for G protein-effector interaction. The chain is Guanine nucleotide-binding protein subunit beta from Oryza sativa subsp. japonica (Rice).